A 232-amino-acid chain; its full sequence is 2,3,4,5-tetrahydropyridine-2,6-dicarboxylate N-acetyltransferase (232 aa).

It belongs to the transferase hexapeptide repeat family. DapH subfamily.

The catalysed reaction is (S)-2,3,4,5-tetrahydrodipicolinate + acetyl-CoA + H2O = L-2-acetamido-6-oxoheptanedioate + CoA. It participates in amino-acid biosynthesis; L-lysine biosynthesis via DAP pathway; LL-2,6-diaminopimelate from (S)-tetrahydrodipicolinate (acetylase route): step 1/3. Functionally, catalyzes the transfer of an acetyl group from acetyl-CoA to tetrahydrodipicolinate. This Kosmotoga olearia (strain ATCC BAA-1733 / DSM 21960 / TBF 19.5.1) protein is 2,3,4,5-tetrahydropyridine-2,6-dicarboxylate N-acetyltransferase.